Consider the following 282-residue polypeptide: NFU1 iron-sulfur cluster scaffold homolog, mitochondrial (282 aa).

Residues 1–27 constitute a mitochondrion transit peptide; it reads MSKLLSYTARIILRNSRITVRQLVRGF. Positions 178 to 246 are nifU; it reads IKELLDTRIR…IPEVESVEQV (69 aa). C215 and C218 together coordinate [4Fe-4S] cluster. A disordered region spans residues 263-282; it reads KNLKQKEPAGAPVGIGGGPN.

This sequence belongs to the NifU family.

The protein resides in the mitochondrion. Molecular scaffold for [Fe-S] cluster assembly of mitochondrial iron-sulfur proteins. This is NFU1 iron-sulfur cluster scaffold homolog, mitochondrial from Drosophila persimilis (Fruit fly).